The following is a 239-amino-acid chain: Serine protease SplF (239 aa).

The N-terminal stretch at 1-36 (MNKNIIIKSIGALTILTSITGVGTTMVEGIQQTAKA) is a signal peptide. Catalysis depends on charge relay system residues H75, D114, and S192.

This sequence belongs to the peptidase S1B family.

Its subcellular location is the secreted. This chain is Serine protease SplF (splF), found in Staphylococcus aureus (strain USA300).